Consider the following 588-residue polypeptide: Proteasome-associated ATPase (588 aa).

The span at 1-10 shows a compositional bias: basic and acidic residues; that stretch reads MAAHDDDMNR. Residues 1–23 are disordered; it reads MAAHDDDMNRGIRPGRGSEDPAG. Residues 47–94 adopt a coiled-coil conformation; that stretch reads RILEERIVELQTNLAGVSAQNERLAGTLREARDQIVALKEEVDRLAQP. 276–281 contributes to the ATP binding site; it reads GCGKTL. Positions 587 to 588 are docks into pockets in the proteasome alpha-ring; sequence YL.

The protein belongs to the AAA ATPase family. As to quaternary structure, homohexamer. Assembles into a hexameric ring structure that caps the 20S proteasome core. Strongly interacts with the prokaryotic ubiquitin-like protein Pup through a hydrophobic interface; the interacting region of ARC lies in its N-terminal coiled-coil domain. There is one Pup binding site per ARC hexamer ring. Upon ATP-binding, the C-terminus of ARC interacts with the alpha-rings of the proteasome core, possibly by binding to the intersubunit pockets.

Its pathway is protein degradation; proteasomal Pup-dependent pathway. Functionally, ATPase which is responsible for recognizing, binding, unfolding and translocation of pupylated proteins into the bacterial 20S proteasome core particle. May be essential for opening the gate of the 20S proteasome via an interaction with its C-terminus, thereby allowing substrate entry and access to the site of proteolysis. Thus, the C-termini of the proteasomal ATPase may function like a 'key in a lock' to induce gate opening and therefore regulate proteolysis. This is Proteasome-associated ATPase from Streptomyces coelicolor (strain ATCC BAA-471 / A3(2) / M145).